A 364-amino-acid chain; its full sequence is Aminomethyltransferase (364 aa).

It belongs to the GcvT family. As to quaternary structure, the glycine cleavage system is composed of four proteins: P, T, L and H.

It carries out the reaction N(6)-[(R)-S(8)-aminomethyldihydrolipoyl]-L-lysyl-[protein] + (6S)-5,6,7,8-tetrahydrofolate = N(6)-[(R)-dihydrolipoyl]-L-lysyl-[protein] + (6R)-5,10-methylene-5,6,7,8-tetrahydrofolate + NH4(+). Its function is as follows. The glycine cleavage system catalyzes the degradation of glycine. This Geobacillus sp. (strain WCH70) protein is Aminomethyltransferase.